The sequence spans 359 residues: Nicotinate-nucleotide--dimethylbenzimidazole phosphoribosyltransferase (359 aa).

Glutamate 318 (proton acceptor) is an active-site residue.

The protein belongs to the CobT family. As to quaternary structure, homodimer.

It catalyses the reaction 5,6-dimethylbenzimidazole + nicotinate beta-D-ribonucleotide = alpha-ribazole 5'-phosphate + nicotinate + H(+). It functions in the pathway nucleoside biosynthesis; alpha-ribazole biosynthesis; alpha-ribazole from 5,6-dimethylbenzimidazole: step 1/2. Its function is as follows. Catalyzes the synthesis of alpha-ribazole-5'-phosphate from nicotinate mononucleotide (NAMN) and 5,6-dimethylbenzimidazole (DMB). The sequence is that of Nicotinate-nucleotide--dimethylbenzimidazole phosphoribosyltransferase from Escherichia coli O127:H6 (strain E2348/69 / EPEC).